Consider the following 477-residue polypeptide: Glycogen synthase (477 aa).

K15 is a binding site for ADP-alpha-D-glucose.

It belongs to the glycosyltransferase 1 family. Bacterial/plant glycogen synthase subfamily.

It catalyses the reaction [(1-&gt;4)-alpha-D-glucosyl](n) + ADP-alpha-D-glucose = [(1-&gt;4)-alpha-D-glucosyl](n+1) + ADP + H(+). Its pathway is glycan biosynthesis; glycogen biosynthesis. Functionally, synthesizes alpha-1,4-glucan chains using ADP-glucose. The protein is Glycogen synthase of Shigella flexneri serotype 5b (strain 8401).